Here is a 182-residue protein sequence, read N- to C-terminus: Dual-action ribosomal maturation protein DarP (182 aa).

This sequence belongs to the DarP family.

The protein resides in the cytoplasm. Functionally, member of a network of 50S ribosomal subunit biogenesis factors which assembles along the 30S-50S interface, preventing incorrect 23S rRNA structures from forming. Promotes peptidyl transferase center (PTC) maturation. This Yersinia pseudotuberculosis serotype O:1b (strain IP 31758) protein is Dual-action ribosomal maturation protein DarP.